The sequence spans 119 residues: Protein TusC (119 aa).

It belongs to the DsrF/TusC family. In terms of assembly, heterohexamer, formed by a dimer of trimers. The hexameric TusBCD complex contains 2 copies each of TusB, TusC and TusD. The TusBCD complex interacts with TusE.

It is found in the cytoplasm. Functionally, part of a sulfur-relay system required for 2-thiolation of 5-methylaminomethyl-2-thiouridine (mnm(5)s(2)U) at tRNA wobble positions. The sequence is that of Protein TusC from Shigella boydii serotype 18 (strain CDC 3083-94 / BS512).